The primary structure comprises 316 residues: Olfactory receptor 2AG2 (316 aa).

Over 1–30 (MELRNSTLGSGFILVGILNDSGSPELLYAT) the chain is Extracellular. Residues N5 and N19 are each glycosylated (N-linked (GlcNAc...) asparagine). The helical transmembrane segment at 31 to 51 (FTILYMLALTSNGLLLLAITI) threads the bilayer. Residues 52–56 (EARLH) are Cytoplasmic-facing. A helical membrane pass occupies residues 57 to 77 (MPMYLLLGQLSLMDLLFTSVV). The Extracellular portion of the chain corresponds to 78 to 97 (TPKALADFLRRENTISFGGC). Cysteines 97 and 179 form a disulfide. The helical transmembrane segment at 98 to 118 (ALQMFLALTMGSAEDLLLAFM) threads the bilayer. The Cytoplasmic portion of the chain corresponds to 119 to 139 (AYDRYVAICHPLKYMTLMSPR). Residues 140 to 160 (VCWIMVATSWILASLIAIGHT) form a helical membrane-spanning segment. Residues 161–205 (MYTMHLPFCVSWEIRHLLCEIPPLLKLACADTSRYELIIYVTGVT) are Extracellular-facing. A helical membrane pass occupies residues 206-226 (FLLLPISAIVASYTLVLFTVL). At 227–244 (RMPSNEGRKKALVTCSSH) the chain is on the cytoplasmic side. The chain crosses the membrane as a helical span at residues 245-265 (LIVVGMFYGAATFMYVLPSSF). At 266 to 271 (HSPKQD) the chain is on the extracellular side. Residues 272-292 (NIISVFYTIVTPALNPLIYSL) traverse the membrane as a helical segment. Residues 293 to 316 (RNKEVMRALRRVLGKYILLAHSTL) lie on the Cytoplasmic side of the membrane.

It belongs to the G-protein coupled receptor 1 family.

It is found in the cell membrane. Odorant receptor. This Homo sapiens (Human) protein is Olfactory receptor 2AG2 (OR2AG2).